The following is a 146-amino-acid chain: 3-dehydroquinate dehydratase (146 aa).

Tyr22 functions as the Proton acceptor in the catalytic mechanism. Asn73, His79, and Asp86 together coordinate substrate. His101 serves as the catalytic Proton donor. Substrate-binding positions include 102-103 (IS) and Arg112.

This sequence belongs to the type-II 3-dehydroquinase family. In terms of assembly, homododecamer.

The enzyme catalyses 3-dehydroquinate = 3-dehydroshikimate + H2O. It participates in metabolic intermediate biosynthesis; chorismate biosynthesis; chorismate from D-erythrose 4-phosphate and phosphoenolpyruvate: step 3/7. In terms of biological role, catalyzes a trans-dehydration via an enolate intermediate. This Corynebacterium pseudotuberculosis (strain C231) protein is 3-dehydroquinate dehydratase (aroQ).